The sequence spans 60 residues: Large ribosomal subunit protein bL32 (60 aa).

This sequence belongs to the bacterial ribosomal protein bL32 family.

This Ehrlichia ruminantium (strain Gardel) protein is Large ribosomal subunit protein bL32.